We begin with the raw amino-acid sequence, 319 residues long: Secreted effector protein sopD2 (319 aa).

Residues 37–44 (WDRFKDCF) carry the Required to target late endocytic compartments motif.

The protein belongs to the SopD family.

It localises to the secreted. The protein resides in the host cell membrane. Functionally, effector proteins function to alter host cell physiology and promote bacterial survival in host tissues. Contributes to the formation of Salmonella-induced filaments (Sifs) in infected epithelial cells and to replication in macrophages. This Salmonella typhimurium (strain LT2 / SGSC1412 / ATCC 700720) protein is Secreted effector protein sopD2 (sopD2).